The following is a 287-amino-acid chain: Seed leukoagglutinin (287 aa).

A signal peptide spans 1 to 29 (MATSNSKPTQVLLATFLTFFFLLLNNVNS). Tyrosine 74 serves as a coordination point for N-acetyl-alpha-neuraminyl-(2-&gt;3)-beta-D-galactosyl-(1-&gt;4)-beta-D-glucose. N-linked (GlcNAc...) (paucimannose) asparagine glycosylation occurs at asparagine 90. Residues aspartate 116, serine 133, and lysine 136 each coordinate N-acetyl-alpha-neuraminyl-(2-&gt;3)-beta-D-galactosyl-(1-&gt;4)-beta-D-glucose. A glycan (N-linked (GlcNAc...) (paucimannose) asparagine) is linked at asparagine 142. The Mn(2+) site is built by glutamate 156 and aspartate 158. Positions 158, 160, 166, and 169 each coordinate Ca(2+). Residues tyrosine 160 and aspartate 166 each coordinate N-acetyl-alpha-neuraminyl-(2-&gt;3)-beta-D-galactosyl-(1-&gt;4)-beta-D-glucose. Mn(2+) is bound by residues aspartate 169 and histidine 174. Asparagine 208 carries an N-linked (GlcNAc...) (high mannose) asparagine; partial glycan. Residue asparagine 220 is glycosylated (N-linked (GlcNAc...) (paucimannose) asparagine; partial). Glutamate 253 provides a ligand contact to N-acetyl-alpha-neuraminyl-(2-&gt;3)-beta-D-galactosyl-(1-&gt;4)-beta-D-glucose. Positions 279–287 (NVHIARYTA) are cleaved as a propeptide — removed in mature form.

Belongs to the leguminous lectin family. As to quaternary structure, homodimer; disulfide-linked. Dimer of homodimers. Post-translationally, the glycosylation on N-90 is determined to by of the high mannose type in PubMed:26003537, while PubMed:27720757 found a paucimannose at this position. Processed at its C-terminus.

In terms of biological role, sialic acid-binding lectin recognizing oligosaccharides containing terminal sialic acid linked via alpha-2,3 bond to penultimate galactose residues. Binds the trisaccharide sequence Neu5Ac-alpha-2,3-Gal-beta-1,4-GlcNAc. Binds fetuin when fully glycosylated but not when the high mannose-type glycans are removed, although the secondary structure is virtually unaffected by deglycosylation of the high mannose-type glycans. The lectin activity may depend on the presence of a single GlcNAc attached to N-90. The sequence is that of Seed leukoagglutinin from Maackia amurensis (Amur maackia).